Reading from the N-terminus, the 620-residue chain is Translocator protein BipB (620 aa).

Positions 58–95 are disordered; sequence QCDAQPAAHDARLDDRPALRAPQERDAPPLGASDTGSR. Positions 66–84 are enriched in basic and acidic residues; sequence HDARLDDRPALRAPQERDA. Residues 309-339 adopt a coiled-coil conformation; that stretch reads EMQAKREAELQKKSDEYQAQVKKAEEMQKTM. The next 3 helical transmembrane spans lie at 355-375, 401-421, and 430-450; these read FAAA…GLAL, AILK…LVAC, and LAGA…AAFV.

This sequence belongs to the SctE/SipB/YopB family.

Its subcellular location is the secreted. The protein localises to the host membrane. Its function is as follows. Plays a role in the bacterium-induced formation of multinucleated giant cell (MNGC), which is formed after host cell fusion, as well as in the intercellular spreading of bacteria and in the induction of apoptosis in macrophages. May act in concert with other effector proteins to induce fusion of host cell membranes. The sequence is that of Translocator protein BipB (bipB) from Burkholderia mallei (strain NCTC 10247).